Here is a 205-residue protein sequence, read N- to C-terminus: tRNA (guanine-N(7)-)-methyltransferase (205 aa).

The S-adenosyl-L-methionine site is built by Glu34, Glu59, Asp86, and Asp107. Residue Asp107 is part of the active site. Substrate is bound at residue Lys111. The tract at residues 113 to 118 is interaction with RNA; that stretch reads RHEKRR. Substrate-binding positions include Asp144 and 182 to 185; that span reads TGYE.

This sequence belongs to the class I-like SAM-binding methyltransferase superfamily. TrmB family.

The enzyme catalyses guanosine(46) in tRNA + S-adenosyl-L-methionine = N(7)-methylguanosine(46) in tRNA + S-adenosyl-L-homocysteine. It participates in tRNA modification; N(7)-methylguanine-tRNA biosynthesis. In terms of biological role, catalyzes the formation of N(7)-methylguanine at position 46 (m7G46) in tRNA. In Mycoplasmopsis synoviae (strain 53) (Mycoplasma synoviae), this protein is tRNA (guanine-N(7)-)-methyltransferase.